The chain runs to 351 residues: Ribosomal RNA small subunit methyltransferase H (351 aa).

Residues 48–50 (GGY), Asp-67, Phe-94, Asp-115, and Gln-122 each bind S-adenosyl-L-methionine. A disordered region spans residues 274–351 (AAQASRHVPG…PAPQGRGPRR (78 aa)).

The protein belongs to the methyltransferase superfamily. RsmH family.

The protein resides in the cytoplasm. It catalyses the reaction cytidine(1402) in 16S rRNA + S-adenosyl-L-methionine = N(4)-methylcytidine(1402) in 16S rRNA + S-adenosyl-L-homocysteine + H(+). Its function is as follows. Specifically methylates the N4 position of cytidine in position 1402 (C1402) of 16S rRNA. The protein is Ribosomal RNA small subunit methyltransferase H of Methylorubrum extorquens (strain ATCC 14718 / DSM 1338 / JCM 2805 / NCIMB 9133 / AM1) (Methylobacterium extorquens).